Reading from the N-terminus, the 217-residue chain is Pyridoxine/pyridoxamine 5'-phosphate oxidase (217 aa).

Substrate-binding positions include 13–16 and lysine 71; that span reads RREY. Residues 66–71, 81–82, arginine 87, lysine 88, and glutamine 110 each bind FMN; these read RIVLLK and YT. Tyrosine 128, arginine 132, and serine 136 together coordinate substrate. Residues 145-146 and tryptophan 190 each bind FMN; that span reads QS. Substrate is bound at residue 196–198; the sequence is RLH. Position 200 (arginine 200) interacts with FMN.

It belongs to the pyridoxamine 5'-phosphate oxidase family. In terms of assembly, homodimer. FMN is required as a cofactor.

The enzyme catalyses pyridoxamine 5'-phosphate + O2 + H2O = pyridoxal 5'-phosphate + H2O2 + NH4(+). It catalyses the reaction pyridoxine 5'-phosphate + O2 = pyridoxal 5'-phosphate + H2O2. It participates in cofactor metabolism; pyridoxal 5'-phosphate salvage; pyridoxal 5'-phosphate from pyridoxamine 5'-phosphate: step 1/1. Its pathway is cofactor metabolism; pyridoxal 5'-phosphate salvage; pyridoxal 5'-phosphate from pyridoxine 5'-phosphate: step 1/1. Its function is as follows. Catalyzes the oxidation of either pyridoxine 5'-phosphate (PNP) or pyridoxamine 5'-phosphate (PMP) into pyridoxal 5'-phosphate (PLP). This Proteus mirabilis (strain HI4320) protein is Pyridoxine/pyridoxamine 5'-phosphate oxidase.